Here is a 375-residue protein sequence, read N- to C-terminus: Alcohol dehydrogenase 6 (375 aa).

S23 carries the phosphoserine modification. Residues C47, H69, C99, C102, C105, C113, and C175 each contribute to the Zn(2+) site. Residues 200-205 (GLGGVG), D224, K229, 293-295 (VGL), and R370 contribute to the NAD(+) site.

The protein belongs to the zinc-containing alcohol dehydrogenase family. Class-V subfamily. Dimer. Requires Zn(2+) as cofactor.

The protein resides in the cytoplasm. It catalyses the reaction a primary alcohol + NAD(+) = an aldehyde + NADH + H(+). The enzyme catalyses a secondary alcohol + NAD(+) = a ketone + NADH + H(+). Functionally, alcohol dehydrogenase. Catalyzes the NAD-dependent oxidation of primary alcohols to the corresponding aldehydes. Oxidizes secondary alcohols to the corresponding ketones. The protein is Alcohol dehydrogenase 6 (ADH6) of Pongo abelii (Sumatran orangutan).